We begin with the raw amino-acid sequence, 446 residues long: Protein dyf-7 (446 aa).

The first 24 residues, 1–24 (MNQLWRASCLQVLITFLLIHQNKA), serve as a signal peptide directing secretion. One can recognise a ZP domain in the interval 35–295 (DCIADSFTVV…KTCYKKVSDS (261 aa)). C211 and C273 form a disulfide bridge. The chain crosses the membrane as a helical span at residues 377–397 (IPLIIMGSLASLLLFSAGAAI).

In terms of assembly, monomer under reducing conditions. Homodimer under non-reducing conditions. May also form higher order oligomers. Post-translationally, proteolytically cleaved and secreted in vitro. In the embryo, expressed in the excretory cell and, during dendrite formation, in the non-neuronal cells surrounding the sensory neurons, including hypodermal cells.

It localises to the cell membrane. It is found in the cell projection. The protein localises to the dendrite. The protein resides in the secreted. In terms of biological role, required for permeability of amphid and phasmid neurons to external dyes, chemotaxis to ammonium chloride, avoidance of high osmotic stimuli, male mating and dauer formation. Along with dex-1, enables neurite growth and maintenance by anchoring amphid dendritic tips during neuron cell body migration in embryonic and larval development. This chain is Protein dyf-7, found in Caenorhabditis elegans.